The sequence spans 236 residues: 1-(5-phosphoribosyl)-5-[(5-phosphoribosylamino)methylideneamino] imidazole-4-carboxamide isomerase (236 aa).

The active-site Proton acceptor is the Asp8. The active-site Proton donor is Asp129.

Belongs to the HisA/HisF family.

The protein localises to the cytoplasm. The catalysed reaction is 1-(5-phospho-beta-D-ribosyl)-5-[(5-phospho-beta-D-ribosylamino)methylideneamino]imidazole-4-carboxamide = 5-[(5-phospho-1-deoxy-D-ribulos-1-ylimino)methylamino]-1-(5-phospho-beta-D-ribosyl)imidazole-4-carboxamide. Its pathway is amino-acid biosynthesis; L-histidine biosynthesis; L-histidine from 5-phospho-alpha-D-ribose 1-diphosphate: step 4/9. The sequence is that of 1-(5-phosphoribosyl)-5-[(5-phosphoribosylamino)methylideneamino] imidazole-4-carboxamide isomerase from Methanocorpusculum labreanum (strain ATCC 43576 / DSM 4855 / Z).